The following is a 322-amino-acid chain: Probable ATP-dependent 6-phosphofructokinase (322 aa).

ATP contacts are provided by residues Gly11, Arg72–Phe73, and Gly102–Ser105. Asp103 provides a ligand contact to Mg(2+). Substrate is bound by residues Thr125–Asp127, Met169–Arg171, Glu222, Lys249, and Tyr255–Arg258. The active-site Proton acceptor is Asp127.

The protein belongs to the phosphofructokinase type A (PFKA) family. Homotetramer. It depends on Mg(2+) as a cofactor.

It is found in the cytoplasm. It carries out the reaction beta-D-fructose 6-phosphate + ATP = beta-D-fructose 1,6-bisphosphate + ADP + H(+). It functions in the pathway carbohydrate degradation; glycolysis; D-glyceraldehyde 3-phosphate and glycerone phosphate from D-glucose: step 3/4. Its function is as follows. Catalyzes the phosphorylation of D-fructose 6-phosphate to fructose 1,6-bisphosphate by ATP, the first committing step of glycolysis. This is Probable ATP-dependent 6-phosphofructokinase (pfkA) from Malacoplasma penetrans (strain HF-2) (Mycoplasma penetrans).